Reading from the N-terminus, the 106-residue chain is Small ribosomal subunit protein bS18 (106 aa).

Basic and acidic residues predominate over residues 1-22 (MSEETTVRPERTERSERPERPQ). Positions 1-34 (MSEETTVRPERTERSERPERPQYRGNGPRKRRPF) are disordered.

Belongs to the bacterial ribosomal protein bS18 family. As to quaternary structure, part of the 30S ribosomal subunit. Forms a tight heterodimer with protein bS6.

In terms of biological role, binds as a heterodimer with protein bS6 to the central domain of the 16S rRNA, where it helps stabilize the platform of the 30S subunit. The chain is Small ribosomal subunit protein bS18 from Geobacter metallireducens (strain ATCC 53774 / DSM 7210 / GS-15).